A 286-amino-acid chain; its full sequence is Centromere protein P (286 aa).

Residues 1–73 (MDSETRELRA…RSEHSFLSKL (73 aa)) adopt a coiled-coil conformation. The residue at position 38 (S38) is a Phosphoserine.

Belongs to the CENP-P/CTF19 family. Component of the CENPA-CAD complex, composed of CENPI, CENPK, CENPL, CENPO, CENPP, CENPQ, CENPR and CENPS. The CENPA-CAD complex interacts with the CENPA-NAC complex, at least composed of CENPA, CENPC, CENPH, CENPM, CENPN, CENPT and CENPU.

It is found in the nucleus. The protein resides in the chromosome. It localises to the centromere. Functionally, component of the CENPA-CAD (nucleosome distal) complex, a complex recruited to centromeres which is involved in assembly of kinetochore proteins, mitotic progression and chromosome segregation. May be involved in incorporation of newly synthesized CENPA into centromeres via its interaction with the CENPA-NAC complex. This Mus musculus (Mouse) protein is Centromere protein P (Cenpp).